A 574-amino-acid polypeptide reads, in one-letter code: Transmembrane glycoprotein NMB (574 aa).

The first 22 residues, 1 to 22 (MESLCGVLGFLLLAAGLPLQAA), serve as a signal peptide directing secretion. At 23 to 502 (KRFRDVLGHE…DPDSPLRAVN (480 aa)) the chain is on the extracellular side. N-linked (GlcNAc...) asparagine glycans are attached at residues Asn-93, Asn-134, Asn-200, Asn-249, Asn-275, Asn-296, Asn-300, Asn-306, and Asn-312. The 89-residue stretch at 250-338 (LSDEIFLRDL…STPPPPSTPP (89 aa)) folds into the PKD domain. Residues 320-353 (PGPCPPPSPSTPPPPSTPPSPPPSPLPTLSTPSP) are disordered. The span at 321–345 (GPCPPPSPSTPPPPSTPPSPPPSPL) shows a compositional bias: pro residues. N-linked (GlcNAc...) asparagine glycans are attached at residues Asn-463 and Asn-471. Residues 503-523 (GVLISIGCLAVLVTMVTILLY) form a helical membrane-spanning segment. The Cytoplasmic portion of the chain corresponds to 524–574 (KKHKAYKPIGNCPRNTVKGKGLSVLLSHAKAPFFRGDQEKDPLLQDKPRTL). Ser-546 is modified (phosphoserine). The Cell attachment site motif lies at 558–560 (RGD).

Belongs to the PMEL/NMB family. May be up-regulated in bone metastatic breast cancer cells.

The protein localises to the cell membrane. The protein resides in the melanosome membrane. Its subcellular location is the early endosome membrane. Functionally, could be a melanogenic enzyme. This chain is Transmembrane glycoprotein NMB (Gpnmb), found in Mus musculus (Mouse).